Reading from the N-terminus, the 245-residue chain is Ribonuclease PH (245 aa).

Phosphate contacts are provided by residues arginine 86 and glycine 124–arginine 126.

This sequence belongs to the RNase PH family. As to quaternary structure, homohexameric ring arranged as a trimer of dimers.

The catalysed reaction is tRNA(n+1) + phosphate = tRNA(n) + a ribonucleoside 5'-diphosphate. Phosphorolytic 3'-5' exoribonuclease that plays an important role in tRNA 3'-end maturation. Removes nucleotide residues following the 3'-CCA terminus of tRNAs; can also add nucleotides to the ends of RNA molecules by using nucleoside diphosphates as substrates, but this may not be physiologically important. Probably plays a role in initiation of 16S rRNA degradation (leading to ribosome degradation) during starvation. The chain is Ribonuclease PH from Bacillus cytotoxicus (strain DSM 22905 / CIP 110041 / 391-98 / NVH 391-98).